We begin with the raw amino-acid sequence, 362 residues long: Putative F-box protein At3g23260 (362 aa).

Positions methionine 1 to histidine 46 constitute an F-box domain.

This Arabidopsis thaliana (Mouse-ear cress) protein is Putative F-box protein At3g23260.